The following is a 117-amino-acid chain: Immunoglobulin kappa variable 1D-43 (117 aa).

Residues 1–22 (MDMRVPAQRLGLLLLWFPGARC) form the signal peptide. Positions 23–45 (AIRMTQSPFSLSASVGDRVTITC) are framework-1. An Ig-like domain is found at 23 to 117 (AIRMTQSPFS…YYCQQYYSTP (95 aa)). The cysteines at positions 45 and 110 are disulfide-linked. The tract at residues 46-56 (WASQGISSYLA) is complementarity-determining-1. The segment at 57 to 71 (WYQQKPAKAPKLFIY) is framework-2. The tract at residues 72–78 (YASSLQS) is complementarity-determining-2. The segment at 79 to 110 (GVPSRFSGSGSGTDYTLTISSLQPEDFATYYC) is framework-3. Residues 111–117 (QQYYSTP) form a complementarity-determining-3 region.

As to quaternary structure, immunoglobulins are composed of two identical heavy chains and two identical light chains; disulfide-linked.

It is found in the secreted. It localises to the cell membrane. Functionally, v region of the variable domain of immunoglobulin light chains that participates in the antigen recognition. Immunoglobulins, also known as antibodies, are membrane-bound or secreted glycoproteins produced by B lymphocytes. In the recognition phase of humoral immunity, the membrane-bound immunoglobulins serve as receptors which, upon binding of a specific antigen, trigger the clonal expansion and differentiation of B lymphocytes into immunoglobulins-secreting plasma cells. Secreted immunoglobulins mediate the effector phase of humoral immunity, which results in the elimination of bound antigens. The antigen binding site is formed by the variable domain of one heavy chain, together with that of its associated light chain. Thus, each immunoglobulin has two antigen binding sites with remarkable affinity for a particular antigen. The variable domains are assembled by a process called V-(D)-J rearrangement and can then be subjected to somatic hypermutations which, after exposure to antigen and selection, allow affinity maturation for a particular antigen. The polypeptide is Immunoglobulin kappa variable 1D-43 (Homo sapiens (Human)).